A 388-amino-acid chain; its full sequence is Succinate--CoA ligase [ADP-forming] subunit beta (388 aa).

One can recognise an ATP-grasp domain in the interval 9-244 (KQLFAEYGLP…PSQDDAREAH (236 aa)). Residues Lys46, 53–55 (GRG), Glu99, Thr102, and Glu107 each bind ATP. Residues Asn199 and Asp213 each coordinate Mg(2+). Residues Asn264 and 321-323 (GIV) each bind substrate.

This sequence belongs to the succinate/malate CoA ligase beta subunit family. Heterotetramer of two alpha and two beta subunits. Requires Mg(2+) as cofactor.

The catalysed reaction is succinate + ATP + CoA = succinyl-CoA + ADP + phosphate. It carries out the reaction GTP + succinate + CoA = succinyl-CoA + GDP + phosphate. The protein operates within carbohydrate metabolism; tricarboxylic acid cycle; succinate from succinyl-CoA (ligase route): step 1/1. Functionally, succinyl-CoA synthetase functions in the citric acid cycle (TCA), coupling the hydrolysis of succinyl-CoA to the synthesis of either ATP or GTP and thus represents the only step of substrate-level phosphorylation in the TCA. The beta subunit provides nucleotide specificity of the enzyme and binds the substrate succinate, while the binding sites for coenzyme A and phosphate are found in the alpha subunit. This is Succinate--CoA ligase [ADP-forming] subunit beta from Pseudomonas aeruginosa (strain UCBPP-PA14).